We begin with the raw amino-acid sequence, 296 residues long: MMFKQYLQVTKPGIIFGNLISVIGGFLLASKGSIDYPLFIYTLVGVSLVVASGCVFNNYIDRDIDRKMERTKNRVLVKGLISPAVSLVYATLLGIAGFMLLWFGANPLACWLGVMGFVVYVGVYSLYMKRHSVYGTLIGSLSGAAPPVIGYCAVTGEFDSGAAILLAIFSLWQMPHSYAIAIFRFKDYQAANIPVLPVVKGISVAKNHITLYIIAFAVATLMLSLGGYAGYKYLVVAAAVSVWWLGMALRGYKVADDRIWARKLFGFSIIAITALSVMMSVDFMVPDSHTLLAAVW.

The Cytoplasmic portion of the chain corresponds to 1–9; that stretch reads MMFKQYLQV. The chain crosses the membrane as a helical span at residues 10–28; that stretch reads TKPGIIFGNLISVIGGFLL. Topologically, residues 29–37 are periplasmic; sequence ASKGSIDYP. Residues 38–56 traverse the membrane as a helical segment; the sequence is LFIYTLVGVSLVVASGCVF. Over 57–78 the chain is Cytoplasmic; that stretch reads NNYIDRDIDRKMERTKNRVLVK. A helical membrane pass occupies residues 79–97; that stretch reads GLISPAVSLVYATLLGIAG. Residues 98 to 107 lie on the Periplasmic side of the membrane; it reads FMLLWFGANP. A helical membrane pass occupies residues 108–126; the sequence is LACWLGVMGFVVYVGVYSL. At 127–197 the chain is on the cytoplasmic side; the sequence is YMKRHSVYGT…YQAANIPVLP (71 aa). The helical transmembrane segment at 198–216 threads the bilayer; that stretch reads VVKGISVAKNHITLYIIAF. Topologically, residues 217 to 228 are periplasmic; sequence AVATLMLSLGGY. Residues 229 to 247 form a helical membrane-spanning segment; sequence AGYKYLVVAAAVSVWWLGM. Over 248–268 the chain is Cytoplasmic; that stretch reads ALRGYKVADDRIWARKLFGFS. The chain crosses the membrane as a helical span at residues 269-287; that stretch reads IIAITALSVMMSVDFMVPD. Over 288 to 296 the chain is Periplasmic; that stretch reads SHTLLAAVW.

The protein belongs to the UbiA prenyltransferase family. Protoheme IX farnesyltransferase subfamily.

It is found in the cell inner membrane. The catalysed reaction is heme b + (2E,6E)-farnesyl diphosphate + H2O = Fe(II)-heme o + diphosphate. It participates in porphyrin-containing compound metabolism; heme O biosynthesis; heme O from protoheme: step 1/1. Functionally, converts heme B (protoheme IX) to heme O by substitution of the vinyl group on carbon 2 of heme B porphyrin ring with a hydroxyethyl farnesyl side group. The sequence is that of Protoheme IX farnesyltransferase from Escherichia coli O139:H28 (strain E24377A / ETEC).